A 913-amino-acid chain; its full sequence is Valine--tRNA ligase (913 aa).

Positions 48–58 (PNVTGSLHMGH) match the 'HIGH' region motif. A 'KMSKS' region motif is present at residues 541-545 (KMSKS). Lys-544 serves as a coordination point for ATP. Positions 839–907 (VVDLEALVSK…IEHRLQSLGV (69 aa)) form a coiled coil.

This sequence belongs to the class-I aminoacyl-tRNA synthetase family. ValS type 1 subfamily. Monomer.

It localises to the cytoplasm. The catalysed reaction is tRNA(Val) + L-valine + ATP = L-valyl-tRNA(Val) + AMP + diphosphate. Functionally, catalyzes the attachment of valine to tRNA(Val). As ValRS can inadvertently accommodate and process structurally similar amino acids such as threonine, to avoid such errors, it has a 'posttransfer' editing activity that hydrolyzes mischarged Thr-tRNA(Val) in a tRNA-dependent manner. The protein is Valine--tRNA ligase of Thermosynechococcus vestitus (strain NIES-2133 / IAM M-273 / BP-1).